The sequence spans 98 residues: Parvalbumin beta 1 (98 aa).

Residue Ser-1 is modified to N-acetylserine. 2 consecutive EF-hand domains span residues 32–67 (KIGLAGKKVFAIIDQDKSDFVEEDELKLFLQVFSAG) and 67–98 (GARALTDAETKAGDSDGDGKIGVDEFAQMIKG). Positions 45, 47, 49, 51, 53, 56, 80, 82, 84, 86, and 91 each coordinate Ca(2+).

This sequence belongs to the parvalbumin family.

In terms of biological role, in muscle, parvalbumin is thought to be involved in relaxation after contraction. It binds two calcium ions. This is Parvalbumin beta 1 from Macruronus magellanicus (Patagonian grenadier).